The chain runs to 236 residues: Ribose-5-phosphate isomerase A (236 aa).

Substrate contacts are provided by residues 32-35 (TGST), 87-90 (DGSD), and 100-103 (KGGG). Glutamate 109 serves as the catalytic Proton acceptor. Residue lysine 127 participates in substrate binding.

The protein belongs to the ribose 5-phosphate isomerase family. Homodimer.

The enzyme catalyses aldehydo-D-ribose 5-phosphate = D-ribulose 5-phosphate. Its pathway is carbohydrate degradation; pentose phosphate pathway; D-ribose 5-phosphate from D-ribulose 5-phosphate (non-oxidative stage): step 1/1. Its function is as follows. Catalyzes the reversible conversion of ribose-5-phosphate to ribulose 5-phosphate. In Haloquadratum walsbyi (strain DSM 16790 / HBSQ001), this protein is Ribose-5-phosphate isomerase A.